We begin with the raw amino-acid sequence, 260 residues long: Indole-3-glycerol phosphate synthase (260 aa).

It belongs to the TrpC family.

It carries out the reaction 1-(2-carboxyphenylamino)-1-deoxy-D-ribulose 5-phosphate + H(+) = (1S,2R)-1-C-(indol-3-yl)glycerol 3-phosphate + CO2 + H2O. It participates in amino-acid biosynthesis; L-tryptophan biosynthesis; L-tryptophan from chorismate: step 4/5. The polypeptide is Indole-3-glycerol phosphate synthase (Staphylococcus aureus (strain MSSA476)).